Consider the following 475-residue polypeptide: Splicing factor U2AF 65 kDa subunit (475 aa).

The disordered stretch occupies residues 1-90 (MSDFDEFERQ…RHEKKKKVRK (90 aa)). Ser2 carries the N-acetylserine modification. Position 2 is a phosphoserine (Ser2). The required for interaction with PRPF19 stretch occupies residues 2-93 (SDFDEFERQL…KKKKVRKYWD (92 aa)). Residues 7-22 (FERQLNENKQERDKEN) show a composition bias toward basic and acidic residues. Lys15 bears the 5-hydroxylysine; by JMJD6; alternate mark. A Glycyl lysine isopeptide (Lys-Gly) (interchain with G-Cter in SUMO2); alternate cross-link involves residue Lys15. A necessary and sufficient to stimulate pre-mRNAs 3'-end cleavage in a CFIm complex-dependent manner region spans residues 17–47 (ERDKENRHRKRSHSRSRSRDRKRRSRSRDRR). The segment covering 23 to 46 (RHRKRSHSRSRSRDRKRRSRSRDR) has biased composition (basic residues). Residues 47–56 (RNRDQRSASR) are compositionally biased toward basic and acidic residues. Residue Lys70 forms a Glycyl lysine isopeptide (Lys-Gly) (interchain with G-Cter in SUMO2); alternate linkage. Lys70 carries the post-translational modification N6-acetyllysine; alternate. Ser79 is modified (phosphoserine). Over residues 79–89 (SPRHEKKKKVR) the composition is skewed to basic residues. RRM domains follow at residues 149 to 231 (RRLY…RPHD), 259 to 337 (HKLF…RASV), and 385 to 466 (LPEE…YCDP). Lys276 is subject to 5-hydroxylysine; by JMJD6. Residue Ser294 is modified to Phosphoserine.

This sequence belongs to the splicing factor SR family. In terms of assembly, interacts with U2AF1L4. Heterodimer with U2AF1. Binds unphosphorylated SF1. Interacts with SCAF11 and SNW1. Interacts with ZRSR2/U2AF1-RS2. Interacts with RBM17. Interacts with PRPF19; the interaction is direct. Interacts with POLR2A (via the C-terminal domain); Interacts with PRPF19; the interaction is direct. Interacts with POLR2A (via the C-terminal domain); recruits PRPF19 and the Prp19 complex to the pre-mRNA. Interacts with KHDC4 (Isoform 2). Interacts with ZRSR2. Interacts with the SF3B complex composed of SF3B1, SF3B2, SF3B3, SF3B4, SF3B5, SF3B6 and PHF5A. Interacts (via N-terminus) with CPSF7 (via C-terminus); this interaction stimulates pre-mRNA 3'-end processing by promoting the recruitment of the CFIm complex to cleavage and polyadenylation signals. Interacts with ARGLU1; interaction may be involved in ARGLU1-mediated modulation of alternative splicing. Post-translationally, lysyl-hydroxylation at Lys-15 and Lys-276 affects the mRNA splicing activity of the protein, leading to regulate some, but not all, alternative splicing events.

The protein resides in the nucleus. Plays a role in pre-mRNA splicing and 3'-end processing. By recruiting PRPF19 and the PRP19C/Prp19 complex/NTC/Nineteen complex to the RNA polymerase II C-terminal domain (CTD), and thereby pre-mRNA, may couple transcription to splicing. Required for the export of mRNA out of the nucleus, even if the mRNA is encoded by an intron-less gene. Positively regulates pre-mRNA 3'-end processing by recruiting the CFIm complex to cleavage and polyadenylation signals. This is Splicing factor U2AF 65 kDa subunit (U2af2) from Mus musculus (Mouse).